The sequence spans 474 residues: Tubulin gamma-1 chain (474 aa).

142–148 (AGGTGSG) lines the GTP pocket.

Belongs to the tubulin family. As to quaternary structure, gamma-tubulin complex is composed of gamma-tubulin and GCP proteins.

The protein localises to the cytoplasm. Its subcellular location is the cytoskeleton. It is found in the microtubule organizing center. It localises to the nucleus. The protein resides in the cell cortex. In terms of biological role, tubulin is the major constituent of microtubules. The gamma chain is found at microtubule organizing centers (MTOC) such as the spindle poles, suggesting that it is involved in the minus-end nucleation of microtubule assembly. Functionally, gamma-tubulin complex is essential for the control of microtubular network remodeling in the course of initiation and development of giant-feeding cells, and for the successful reproduction of nematodes (e.g. Meloidogyne spp.) in their plant hosts. This Arabidopsis thaliana (Mouse-ear cress) protein is Tubulin gamma-1 chain (TUBG1).